We begin with the raw amino-acid sequence, 150 residues long: Arginine repressor (150 aa).

Belongs to the ArgR family.

The protein localises to the cytoplasm. It functions in the pathway amino-acid biosynthesis; L-arginine biosynthesis [regulation]. Functionally, regulates arginine biosynthesis genes. This is Arginine repressor from Staphylococcus saprophyticus subsp. saprophyticus (strain ATCC 15305 / DSM 20229 / NCIMB 8711 / NCTC 7292 / S-41).